The primary structure comprises 610 residues: ATP-dependent zinc metalloprotease FtsH (610 aa).

At 1 to 3 the chain is on the cytoplasmic side; that stretch reads MAK. The helical transmembrane segment at 4-24 threads the bilayer; sequence NLMLWLVIAVVLMSIFQNFSA. Topologically, residues 25–97 are extracellular; that stretch reads NNINNRKIDY…IIGAAPEEQS (73 aa). Residues 98-118 traverse the membrane as a helical segment; it reads FFTAIFISWFPMLLLIGVWVF. Topologically, residues 119–610 are cytoplasmic; it reads FMRQMQVGGG…SNICTDDDNN (492 aa). 192-199 is a binding site for ATP; that stretch reads GPPGTGKT. H414 contributes to the Zn(2+) binding site. The active site involves E415. H418 and D492 together coordinate Zn(2+).

In the central section; belongs to the AAA ATPase family. The protein in the C-terminal section; belongs to the peptidase M41 family. Homohexamer. The cofactor is Zn(2+).

The protein resides in the cell membrane. Functionally, acts as a processive, ATP-dependent zinc metallopeptidase for both cytoplasmic and membrane proteins. Plays a role in the quality control of integral membrane proteins. The sequence is that of ATP-dependent zinc metalloprotease FtsH from Buchnera aphidicola subsp. Baizongia pistaciae (strain Bp).